A 342-amino-acid polypeptide reads, in one-letter code: Ferredoxin--NADP reductase (342 aa).

Residues cysteine 17, aspartate 36, glutamine 44, tyrosine 49, valine 89, phenylalanine 124, aspartate 289, and threonine 330 each contribute to the FAD site.

The protein belongs to the ferredoxin--NADP reductase type 2 family. As to quaternary structure, homodimer. It depends on FAD as a cofactor.

The catalysed reaction is 2 reduced [2Fe-2S]-[ferredoxin] + NADP(+) + H(+) = 2 oxidized [2Fe-2S]-[ferredoxin] + NADPH. In Bradyrhizobium sp. (strain ORS 278), this protein is Ferredoxin--NADP reductase.